Reading from the N-terminus, the 215-residue chain is NADH-quinone oxidoreductase subunit C (215 aa).

Belongs to the complex I 30 kDa subunit family. As to quaternary structure, NDH-1 is composed of 14 different subunits. Subunits NuoB, C, D, E, F, and G constitute the peripheral sector of the complex.

The protein localises to the cell inner membrane. It catalyses the reaction a quinone + NADH + 5 H(+)(in) = a quinol + NAD(+) + 4 H(+)(out). In terms of biological role, NDH-1 shuttles electrons from NADH, via FMN and iron-sulfur (Fe-S) centers, to quinones in the respiratory chain. The immediate electron acceptor for the enzyme in this species is believed to be ubiquinone. Couples the redox reaction to proton translocation (for every two electrons transferred, four hydrogen ions are translocated across the cytoplasmic membrane), and thus conserves the redox energy in a proton gradient. The sequence is that of NADH-quinone oxidoreductase subunit C from Dinoroseobacter shibae (strain DSM 16493 / NCIMB 14021 / DFL 12).